Here is a 528-residue protein sequence, read N- to C-terminus: Probable cyclic di-GMP phosphodiesterase PdeC (528 aa).

2 helical membrane-spanning segments follow: residues G14 to A34 and H242 to L262. In terms of domain architecture, EAL spans Y268–P520.

Its subcellular location is the cell inner membrane. It catalyses the reaction 3',3'-c-di-GMP + H2O = 5'-phosphoguanylyl(3'-&gt;5')guanosine + H(+). Functionally, phosphodiesterase (PDE) that catalyzes the hydrolysis of cyclic-di-GMP (c-di-GMP) to 5'-pGpG. Cyclic-di-GMP is a second messenger which controls cell surface-associated traits in bacteria. Overexpression reduces biofilm formation. The sequence is that of Probable cyclic di-GMP phosphodiesterase PdeC from Escherichia coli (strain K12).